Here is a 152-residue protein sequence, read N- to C-terminus: Superoxide dismutase [Cu-Zn] (152 aa).

3 residues coordinate Cu cation: histidine 45, histidine 47, and histidine 62. Cysteine 56 and cysteine 145 are oxidised to a cystine. Residues histidine 62, histidine 70, histidine 79, and aspartate 82 each contribute to the Zn(2+) site. Histidine 119 serves as a coordination point for Cu cation.

It belongs to the Cu-Zn superoxide dismutase family. In terms of assembly, homodimer. It depends on Cu cation as a cofactor. Zn(2+) is required as a cofactor.

It localises to the cytoplasm. The catalysed reaction is 2 superoxide + 2 H(+) = H2O2 + O2. Functionally, destroys radicals which are normally produced within the cells and which are toxic to biological systems. This chain is Superoxide dismutase [Cu-Zn] (SODCC), found in Spinacia oleracea (Spinach).